We begin with the raw amino-acid sequence, 255 residues long: Glycerol-3-phosphate regulon repressor (255 aa).

The region spanning 3 to 58 (QSLRHQKIIKLVEQSGYLSTEELVAALDVSPQTIRRDLNILAELDLIRRHHGGAAS) is the HTH deoR-type domain. Positions 20–39 (LSTEELVAALDVSPQTIRRD) form a DNA-binding region, H-T-H motif.

Its function is as follows. Repressor of the glycerol-3-phosphate regulon. This Haemophilus influenzae (strain ATCC 51907 / DSM 11121 / KW20 / Rd) protein is Glycerol-3-phosphate regulon repressor (glpR).